Reading from the N-terminus, the 93-residue chain is Small ribosomal subunit protein uS19 (93 aa).

The protein belongs to the universal ribosomal protein uS19 family.

Functionally, protein S19 forms a complex with S13 that binds strongly to the 16S ribosomal RNA. This Lawsonia intracellularis (strain PHE/MN1-00) protein is Small ribosomal subunit protein uS19.